A 34-amino-acid polypeptide reads, in one-letter code: Photosystem II reaction center protein M (34 aa).

The chain crosses the membrane as a helical span at residues 5 to 25 (ILAFIATALFILVPTAFLLII).

The protein belongs to the PsbM family. As to quaternary structure, PSII is composed of 1 copy each of membrane proteins PsbA, PsbB, PsbC, PsbD, PsbE, PsbF, PsbH, PsbI, PsbJ, PsbK, PsbL, PsbM, PsbT, PsbX, PsbY, PsbZ, Psb30/Ycf12, at least 3 peripheral proteins of the oxygen-evolving complex and a large number of cofactors. It forms dimeric complexes.

Its subcellular location is the plastid. It is found in the chloroplast thylakoid membrane. Functionally, one of the components of the core complex of photosystem II (PSII). PSII is a light-driven water:plastoquinone oxidoreductase that uses light energy to abstract electrons from H(2)O, generating O(2) and a proton gradient subsequently used for ATP formation. It consists of a core antenna complex that captures photons, and an electron transfer chain that converts photonic excitation into a charge separation. This subunit is found at the monomer-monomer interface. The polypeptide is Photosystem II reaction center protein M (Cenchrus americanus (Pearl millet)).